A 248-amino-acid polypeptide reads, in one-letter code: Triosephosphate isomerase (248 aa).

2 residues coordinate substrate: Asn-11 and Lys-13. Catalysis depends on His-95, which acts as the Electrophile. The active-site Proton acceptor is the Glu-165.

Belongs to the triosephosphate isomerase family. Homodimer.

The protein localises to the cytoplasm. The catalysed reaction is dihydroxyacetone phosphate = methylglyoxal + phosphate. It catalyses the reaction D-glyceraldehyde 3-phosphate = dihydroxyacetone phosphate. Its pathway is carbohydrate degradation; glycolysis; D-glyceraldehyde 3-phosphate from glycerone phosphate: step 1/1. It functions in the pathway carbohydrate biosynthesis; gluconeogenesis. Triosephosphate isomerase is an extremely efficient metabolic enzyme that catalyzes the interconversion between dihydroxyacetone phosphate (DHAP) and D-glyceraldehyde-3-phosphate (G3P) in glycolysis and gluconeogenesis. In terms of biological role, it is also responsible for the non-negligible production of methylglyoxal a reactive cytotoxic side-product that modifies and can alter proteins, DNA and lipids. The sequence is that of Triosephosphate isomerase (TPI1) from Gallus gallus (Chicken).